Here is a 144-residue protein sequence, read N- to C-terminus: Large ribosomal subunit protein uL15 (144 aa).

The tract at residues 1 to 52 (MRLNTLSPAEGAKHAPKRVGRGIGSGLGKTAGRGHKGQNSRSGGGVRRGFEG) is disordered. A compositionally biased stretch (gly residues) spans 21–31 (RGIGSGLGKTA).

This sequence belongs to the universal ribosomal protein uL15 family. Part of the 50S ribosomal subunit.

Functionally, binds to the 23S rRNA. The sequence is that of Large ribosomal subunit protein uL15 from Yersinia enterocolitica serotype O:8 / biotype 1B (strain NCTC 13174 / 8081).